A 133-amino-acid chain; its full sequence is S-adenosylmethionine decarboxylase proenzyme (133 aa).

Ser64 (schiff-base intermediate with substrate; via pyruvic acid) is an active-site residue. Ser64 is subject to Pyruvic acid (Ser); by autocatalysis. His69 serves as the catalytic Proton acceptor; for processing activity. Cys84 serves as the catalytic Proton donor; for catalytic activity.

This sequence belongs to the prokaryotic AdoMetDC family. Type 1 subfamily. As to quaternary structure, heterotetramer of two alpha and two beta chains arranged as a dimer of alpha/beta heterodimers. It depends on pyruvate as a cofactor. In terms of processing, is synthesized initially as an inactive proenzyme. Formation of the active enzyme involves a self-maturation process in which the active site pyruvoyl group is generated from an internal serine residue via an autocatalytic post-translational modification. Two non-identical subunits are generated from the proenzyme in this reaction, and the pyruvate is formed at the N-terminus of the alpha chain, which is derived from the carboxyl end of the proenzyme. The post-translation cleavage follows an unusual pathway, termed non-hydrolytic serinolysis, in which the side chain hydroxyl group of the serine supplies its oxygen atom to form the C-terminus of the beta chain, while the remainder of the serine residue undergoes an oxidative deamination to produce ammonia and the pyruvoyl group blocking the N-terminus of the alpha chain.

The catalysed reaction is S-adenosyl-L-methionine + H(+) = S-adenosyl 3-(methylsulfanyl)propylamine + CO2. The protein operates within amine and polyamine biosynthesis; S-adenosylmethioninamine biosynthesis; S-adenosylmethioninamine from S-adenosyl-L-methionine: step 1/1. Its function is as follows. Catalyzes the decarboxylation of S-adenosylmethionine to S-adenosylmethioninamine (dcAdoMet), the propylamine donor required for the synthesis of the polyamines spermine and spermidine from the diamine putrescine. This is S-adenosylmethionine decarboxylase proenzyme from Sulfurihydrogenibium sp. (strain YO3AOP1).